Consider the following 159-residue polypeptide: Large ribosomal subunit protein eL24 (159 aa).

Residues Ala118–Arg159 form a disordered region. Polar residues predominate over residues Gln137–Asn147.

The protein belongs to the eukaryotic ribosomal protein eL24 family.

The chain is Large ribosomal subunit protein eL24 from Caenorhabditis elegans.